A 348-amino-acid polypeptide reads, in one-letter code: Centromere protein N-B (348 aa).

The protein belongs to the CENP-N/CHL4 family.

The protein resides in the nucleus. It localises to the chromosome. It is found in the centromere. Probable component of a centromeric complex involved in assembly of kinetochore proteins, mitotic progression and chromosome segregation. The sequence is that of Centromere protein N-B (cenpn-b) from Xenopus laevis (African clawed frog).